A 229-amino-acid polypeptide reads, in one-letter code: Uracil-DNA glycosylase (229 aa).

Residue D71 is the Proton acceptor of the active site.

It belongs to the uracil-DNA glycosylase (UDG) superfamily. UNG family.

It localises to the cytoplasm. It catalyses the reaction Hydrolyzes single-stranded DNA or mismatched double-stranded DNA and polynucleotides, releasing free uracil.. Excises uracil residues from the DNA which can arise as a result of misincorporation of dUMP residues by DNA polymerase or due to deamination of cytosine. The sequence is that of Uracil-DNA glycosylase from Campylobacter lari (strain RM2100 / D67 / ATCC BAA-1060).